The following is a 969-amino-acid chain: RNA polymerase-associated protein RapA (969 aa).

The Helicase ATP-binding domain maps to 164–334 (EVGRRHAPRV…FARLRLLDPD (171 aa)). 177 to 184 (DEVGLGKT) serves as a coordination point for ATP. Residues 280–283 (DEAH) carry the DEAH box motif. The region spanning 492–686 (RVNWLLEKVK…ELKSQLEQGR (195 aa)) is the Helicase C-terminal domain.

This sequence belongs to the SNF2/RAD54 helicase family. RapA subfamily. As to quaternary structure, interacts with the RNAP. Has a higher affinity for the core RNAP than for the holoenzyme. Its ATPase activity is stimulated by binding to RNAP.

Transcription regulator that activates transcription by stimulating RNA polymerase (RNAP) recycling in case of stress conditions such as supercoiled DNA or high salt concentrations. Probably acts by releasing the RNAP, when it is trapped or immobilized on tightly supercoiled DNA. Does not activate transcription on linear DNA. Probably not involved in DNA repair. The protein is RNA polymerase-associated protein RapA of Vibrio parahaemolyticus serotype O3:K6 (strain RIMD 2210633).